Here is a 286-residue protein sequence, read N- to C-terminus: Octanoyltransferase (286 aa).

A BPL/LPL catalytic domain is found at 50–278; it reads LRTPDELWIV…NIAQRHAGVI (229 aa). Residues 89–96, 190–192, and 203–205 contribute to the substrate site; these read RGGQVTWH, SLG, and GVA. C221 functions as the Acyl-thioester intermediate in the catalytic mechanism.

The protein belongs to the LipB family.

It localises to the cytoplasm. The catalysed reaction is octanoyl-[ACP] + L-lysyl-[protein] = N(6)-octanoyl-L-lysyl-[protein] + holo-[ACP] + H(+). Its pathway is protein modification; protein lipoylation via endogenous pathway; protein N(6)-(lipoyl)lysine from octanoyl-[acyl-carrier-protein]: step 1/2. Its function is as follows. Catalyzes the transfer of endogenously produced octanoic acid from octanoyl-acyl-carrier-protein onto the lipoyl domains of lipoate-dependent enzymes. Lipoyl-ACP can also act as a substrate although octanoyl-ACP is likely to be the physiological substrate. This is Octanoyltransferase from Psychrobacter arcticus (strain DSM 17307 / VKM B-2377 / 273-4).